The sequence spans 180 residues: Outer-membrane lipoprotein LolB (180 aa).

The N-terminal stretch at 1–16 is a signal peptide; that stretch reads MIRRVLLLSLALLLAG. Cys-17 is lipidated: N-palmitoyl cysteine. Cys-17 carries S-diacylglycerol cysteine lipidation.

The protein belongs to the LolB family. Monomer.

Its subcellular location is the cell outer membrane. Plays a critical role in the incorporation of lipoproteins in the outer membrane after they are released by the LolA protein. The chain is Outer-membrane lipoprotein LolB from Chromobacterium violaceum (strain ATCC 12472 / DSM 30191 / JCM 1249 / CCUG 213 / NBRC 12614 / NCIMB 9131 / NCTC 9757 / MK).